Reading from the N-terminus, the 447-residue chain is Multicopper oxidase mco (447 aa).

The span at 1–25 shows a compositional bias: basic and acidic residues; that stretch reads MMNMKEDKKNTMDMTNMKHHDERKK. The segment at 1 to 29 is disordered; sequence MMNMKEDKKNTMDMTNMKHHDERKKLNSS. Residues histidine 107, histidine 109, histidine 147, histidine 149, histidine 375, histidine 378, histidine 380, histidine 428, cysteine 429, histidine 430, histidine 434, and methionine 439 each coordinate Cu cation.

The protein belongs to the multicopper oxidase family. Requires Cu cation as cofactor.

It is found in the cytoplasm. In terms of biological role, may be involved in copper homeostasis and oxidative stress response. The chain is Multicopper oxidase mco (mco) from Staphylococcus haemolyticus (strain JCSC1435).